Consider the following 325-residue polypeptide: DNA repair and recombination protein RadA (325 aa).

107-114 (GEFGSGKT) contacts ATP.

The protein belongs to the eukaryotic RecA-like protein family.

Functionally, involved in DNA repair and in homologous recombination. Binds and assemble on single-stranded DNA to form a nucleoprotein filament. Hydrolyzes ATP in a ssDNA-dependent manner and promotes DNA strand exchange between homologous DNA molecules. In Methanococcoides burtonii (strain DSM 6242 / NBRC 107633 / OCM 468 / ACE-M), this protein is DNA repair and recombination protein RadA.